Here is a 257-residue protein sequence, read N- to C-terminus: Transmembrane protein C257L (257 aa).

The next 2 helical transmembrane spans lie at 123–143 and 163–183; these read LELL…FTAL and MMIF…YVLV.

It belongs to the asfivirus C257R family.

It localises to the host membrane. The protein resides in the virion. This is Transmembrane protein C257L from African swine fever virus (isolate Warthog/Namibia/Wart80/1980) (ASFV).